The following is a 320-amino-acid chain: 3-O-acetylpapaveroxine carboxylesterase CXE1 (320 aa).

An Involved in the stabilization of the negatively charged intermediate by the formation of the oxyanion hole motif is present at residues 72-74 (HGG). Catalysis depends on residues Ser-158, Asp-262, and His-292.

Belongs to the 'GDXG' lipolytic enzyme family.

It catalyses the reaction 3-O-acetylpapaveroxine + H2O = narcotine hemiacetal + acetate + H(+). It participates in alkaloid biosynthesis. Its function is as follows. Carboxylesterase involved in the biosynthesis of the benzylisoquinoline alkaloid noscapine. Converts 3-O-acetylpapaveroxine to papaveroxine which spontaneously rearranges to narcotine hemiacetal. This Papaver somniferum (Opium poppy) protein is 3-O-acetylpapaveroxine carboxylesterase CXE1.